Here is a 257-residue protein sequence, read N- to C-terminus: MALVVKDDVKISEFINLSAAEKFLPAVMTSVKTVRISKVDKVIAMENDSLSDVDLLKGVKLVKDGYVCLAGLVVSGEWNLPDNCRGGVSVCLVDKRMQRDDEATLGSYRTSAAKKRFAFKLIPNYSITTADAERKVWQVLVNIRGVAMEKGFCPLSLEFVSVCIVHKSNIKLGLREKITSVSEGGPVELTEAVVDEFIESVPMADRLRKFRNQSKKGSNKYVGKRNDNKGLNKEGKLFDKVRIGQNSESSDAESSSF.

A disordered region spans residues 212–257; that stretch reads NQSKKGSNKYVGKRNDNKGLNKEGKLFDKVRIGQNSESSDAESSSF. The segment covering 224–242 has biased composition (basic and acidic residues); that stretch reads KRNDNKGLNKEGKLFDKVR. The span at 247–257 shows a compositional bias: low complexity; the sequence is SESSDAESSSF.

It belongs to the tobamovirus movement protein family.

The protein localises to the host cytoplasm. The protein resides in the host cytoskeleton. It is found in the host cell junction. It localises to the host plasmodesma. Transports viral genome to neighboring plant cells directly through plasmosdesmata, without any budding. The movement protein allows efficient cell to cell propagation, by bypassing the host cell wall barrier. Forms a ribonucleoprotein complex with viral RNA. Binds microtubules and modulates microtubule stability. Can bind double-stranded DNA. This chain is Movement protein (MP), found in Vicia faba (Broad bean).